We begin with the raw amino-acid sequence, 121 residues long: SLLEFGKMILEETGKLAIPSYSSYGCYCGWGGKGTPKDATDRCCFVHDCCYGNLPDCNPKSDRYKYKRVNGAIVCEKGTSCENRICECDKAAAICFRQNLNTYSKKYMLYPDFLCKGELKC.

7 disulfides stabilise this stretch: C26/C115, C28/C44, C43/C95, C49/C121, C50/C88, C57/C81, and C75/C86. 3 residues coordinate Ca(2+): Y27, G29, and G31. The active site involves H47. Position 48 (D48) interacts with Ca(2+). The active site involves D89.

The protein belongs to the phospholipase A2 family. Group II subfamily. D49 sub-subfamily. In terms of assembly, monomer. Ca(2+) serves as cofactor. As to expression, expressed by the venom gland.

The protein localises to the secreted. It catalyses the reaction a 1,2-diacyl-sn-glycero-3-phosphocholine + H2O = a 1-acyl-sn-glycero-3-phosphocholine + a fatty acid + H(+). Oxyphenbutazone (OPB), anisic acid and atropine inhibit the enzymatic activity by binding at the substrate-binding site. P-coumaric acid, resveratrol, spermidine, corticosterone and gramine derivative inhibit the enzymatic activity by binding at the substrate-binding site. In terms of biological role, snake venom phospholipase A2 (PLA2) that shows weak neurotoxicity and medium anticoagulant effects by binding to factor Xa (F10) and inhibiting the prothrombinase activity (IC(50) is 130 nM). It also damages vital organs such as lung, liver and kidney, displays edema-inducing activities when injected into the foot pads of mice and induces necrosis of muscle cells when injected into the thigh muscle. Has a low enzymatic activity. PLA2 catalyzes the calcium-dependent hydrolysis of the 2-acyl groups in 3-sn-phosphoglycerides. The sequence is that of Basic phospholipase A2 VRV-PL-VIIIa from Daboia russelii (Russel's viper).